Consider the following 166-residue polypeptide: Peptidyl-prolyl cis-trans isomerase-like 1 (166 aa).

One can recognise a PPIase cyclophilin-type domain in the interval 10 to 164 (QPPNVYLETS…DDVKIIKAYP (155 aa)). Residues 54–65 (HRIIKDFMIQGG), 70–71 (TG), 99–104 (AMANAG), 109–113 (GSQFF), Thr-119, and Lys-125 each bind cyclosporin A. Ser-149 carries the phosphoserine modification.

Belongs to the cyclophilin-type PPIase family. PPIL1 subfamily. In terms of assembly, identified in the spliceosome C complex. Interacts with SNW1/SKIP. Interacts with CDC40/PRP17; this interaction leads to CDC40 isomerization. Interacts with RBM22.

The protein localises to the nucleus. It catalyses the reaction [protein]-peptidylproline (omega=180) = [protein]-peptidylproline (omega=0). With respect to regulation, inhibited by Cyclosporin A. Functionally, involved in pre-mRNA splicing as component of the spliceosome. PPIases accelerate the folding of proteins. It catalyzes the cis-trans isomerization of proline imidic peptide bonds in oligopeptides. Catalyzes prolyl peptide bond isomerization in CDC40/PRP17. Plays an important role in embryonic brain development; this function is independent of its isomerase activity. The sequence is that of Peptidyl-prolyl cis-trans isomerase-like 1 (PPIL1) from Bos taurus (Bovine).